Here is a 156-residue protein sequence, read N- to C-terminus: SsrA-binding protein (156 aa).

This sequence belongs to the SmpB family.

The protein localises to the cytoplasm. Functionally, required for rescue of stalled ribosomes mediated by trans-translation. Binds to transfer-messenger RNA (tmRNA), required for stable association of tmRNA with ribosomes. tmRNA and SmpB together mimic tRNA shape, replacing the anticodon stem-loop with SmpB. tmRNA is encoded by the ssrA gene; the 2 termini fold to resemble tRNA(Ala) and it encodes a 'tag peptide', a short internal open reading frame. During trans-translation Ala-aminoacylated tmRNA acts like a tRNA, entering the A-site of stalled ribosomes, displacing the stalled mRNA. The ribosome then switches to translate the ORF on the tmRNA; the nascent peptide is terminated with the 'tag peptide' encoded by the tmRNA and targeted for degradation. The ribosome is freed to recommence translation, which seems to be the essential function of trans-translation. This chain is SsrA-binding protein, found in Maricaulis maris (strain MCS10) (Caulobacter maris).